A 251-amino-acid polypeptide reads, in one-letter code: Osmotin-like protein (251 aa).

Residues 1 to 21 (MSHLTTFLVFFLLAFVTYTYA) form the signal peptide. 8 disulfides stabilise this stretch: Cys-31–Cys-226, Cys-73–Cys-83, Cys-88–Cys-94, Cys-142–Cys-214, Cys-147–Cys-197, Cys-155–Cys-165, Cys-169–Cys-178, and Cys-179–Cys-184. Asn-233 carries an N-linked (GlcNAc...) asparagine glycan.

Belongs to the thaumatin family.

This Nicotiana tabacum (Common tobacco) protein is Osmotin-like protein (OLPA).